Reading from the N-terminus, the 344-residue chain is rRNA 2'-O-methyltransferase fibrillarin (344 aa).

Positions methionine 1–isoleucine 113 are disordered. Residues proline 8 to glycine 107 are compositionally biased toward gly residues. Asymmetric dimethylarginine is present on residues arginine 9, arginine 23, arginine 25, arginine 40, arginine 42, arginine 48, arginine 51, arginine 58, arginine 63, arginine 71, arginine 77, arginine 83, arginine 88, arginine 93, and arginine 98. Residues threonine 197–threonine 198, glutamate 216–phenylalanine 217, aspartate 241–alanine 242, and aspartate 261–glutamine 264 contribute to the S-adenosyl-L-methionine site.

The protein belongs to the methyltransferase superfamily. Fibrillarin family. Component of box C/D small nucleolar ribonucleoprotein (snoRNP) particles. It is associated with the U3, U8 and U13 small nuclear RNAs. Post-translationally, by homology to other fibrillarins, some or all of the N-terminal domain arginines are modified to asymmetric dimethylarginine (DMA).

It localises to the nucleus. Its subcellular location is the nucleolus. It catalyses the reaction L-glutaminyl-[histone H2A] + S-adenosyl-L-methionine = N(5)-methyl-L-glutaminyl-[histone H2A] + S-adenosyl-L-homocysteine + H(+). Functionally, S-adenosyl-L-methionine-dependent methyltransferase that has the ability to methylate both RNAs and proteins. Involved in pre-rRNA processing. Utilizes the methyl donor S-adenosyl-L-methionine to catalyze the site-specific 2'-hydroxyl methylation of ribose moieties in pre-ribosomal RNA. Site specificity is provided by a guide RNA that base pairs with the substrate. Methylation occurs at a characteristic distance from the sequence involved in base pairing with the guide RNA. Also acts as a protein methyltransferase by mediating methylation of 'Gln-105' of histone H2A (H2AQ105me), a modification that impairs binding of the FACT complex and is specifically present at 35S ribosomal DNA locus. The chain is rRNA 2'-O-methyltransferase fibrillarin from Drosophila melanogaster (Fruit fly).